We begin with the raw amino-acid sequence, 247 residues long: ATP synthase subunit C lysine N-methyltransferase (247 aa).

Residue M1 is modified to N-acetylmethionine. Residues 1-12 are compositionally biased toward basic and acidic residues; it reads MERVGTPEEERQ. The tract at residues 1–25 is disordered; sequence MERVGTPEEERQAGPVLPTSLESDS. A helical membrane pass occupies residues 34 to 54; that stretch reads LITGVVGGALLTVYAVATPFI. The segment at 51–85 is required for mitochondrial location; that stretch reads TPFITPALRKVCLPFVPATSKQVENVVRMLRHRRG. Positions 209 to 247 are disordered; that stretch reads QRGRGGRPNQEWVGQKNLSETAGLQASSSETRSKLLDVE. Polar residues predominate over residues 224–238; that stretch reads KNLSETAGLQASSSE.

This sequence belongs to the ANT/ATPSC lysine N-methyltransferase family. In terms of tissue distribution, ubiquitously expressed.

It localises to the mitochondrion membrane. The catalysed reaction is L-lysyl-[protein] + 3 S-adenosyl-L-methionine = N(6),N(6),N(6)-trimethyl-L-lysyl-[protein] + 3 S-adenosyl-L-homocysteine + 3 H(+). Mitochondrial protein-lysine N-methyltransferase that trimethylates ATP synthase subunit C, ATP5MC1 and ATP5MC2. Trimethylation is required for proper incorporation of the C subunit into the ATP synthase complex and mitochondrial respiration. Promotes chronic pain. Involved in persistent inflammatory and neuropathic pain: methyltransferase activity in the mitochondria of sensory neurons promotes chronic pain via a pathway that depends on the production of reactive oxygen species (ROS) and on the engagement of spinal cord microglia. The protein is ATP synthase subunit C lysine N-methyltransferase of Mus musculus (Mouse).